Consider the following 405-residue polypeptide: CMP-sialic acid transporter 4 (405 aa).

Residues 1-43 (MQRNGVMECSVCHSKVVAPSPRSVSRAYDKHRSKISSKYRALN) lie on the Cytoplasmic side of the membrane. The chain crosses the membrane as a helical span at residues 44-64 (FLLVSGDCILVGLQPILVFMS). The Lumenal segment spans residues 65–74 (KVDGKFQFSP). A helical membrane pass occupies residues 75-95 (ISVNFLTEVTKVIFAIVMLII). The Cytoplasmic portion of the chain corresponds to 96–121 (QSRKQKVGEKPLLSLSTFVQAARNNA). Residues 122 to 142 (LLAVPALLYAINNYLKFIMQL) traverse the membrane as a helical segment. A topological domain (lumenal) is located at residue Y143. Residues 144-164 (FSPATVKMLSNLKVLVIAILL) traverse the membrane as a helical segment. Residues 165–171 (KFIMRRK) are Cytoplasmic-facing. Residues 172–192 (FSIIQWEALALLLIGISVNQL) form a helical membrane-spanning segment. Residues 193–203 (SSIPDGTKSFG) are Lumenal-facing. Residues 204 to 224 (LAVTTIAYIYTLIFVTVPSLA) form a helical membrane-spanning segment. At 225–244 (SVYNEYALKSQFDTSIYLQN) the chain is on the cytoplasmic side. A helical transmembrane segment spans residues 245 to 265 (LFLYGYGAIFNFLGILGTVIF). Topologically, residues 266 to 281 (QGPESFDILRGHSRAT) are lumenal. The chain crosses the membrane as a helical span at residues 282-302 (MFLICNNAAQGILSSFFFKYA). Residues 303-322 (DTILKKYSSTVATIFTGLAS) lie on the Cytoplasmic side of the membrane. A helical membrane pass occupies residues 323–343 (AAFLGHTLTVNFLLGISIVFI). The Lumenal portion of the chain corresponds to 344–405 (SMHQFFSPLA…TDERKPLLPI (62 aa)).

The protein belongs to the nucleotide-sugar transporter family. CMP-Sialate:CMP antiporter (TC 2.A.7.12) subfamily.

The protein resides in the golgi apparatus membrane. Its function is as follows. Sugar transporter involved in the transport of CMP-sialic acid from the cytoplasm into the Golgi. May transport important nucleotide sugars such as CMP-Kdo (2-keto-3-deoxy-D-manno-octulosonic acid) in physiological conditions. In Oryza sativa subsp. japonica (Rice), this protein is CMP-sialic acid transporter 4.